The sequence spans 94 residues: Aspartyl/glutamyl-tRNA(Asn/Gln) amidotransferase subunit C (94 aa).

Belongs to the GatC family. In terms of assembly, heterotrimer of A, B and C subunits.

The catalysed reaction is L-glutamyl-tRNA(Gln) + L-glutamine + ATP + H2O = L-glutaminyl-tRNA(Gln) + L-glutamate + ADP + phosphate + H(+). The enzyme catalyses L-aspartyl-tRNA(Asn) + L-glutamine + ATP + H2O = L-asparaginyl-tRNA(Asn) + L-glutamate + ADP + phosphate + 2 H(+). In terms of biological role, allows the formation of correctly charged Asn-tRNA(Asn) or Gln-tRNA(Gln) through the transamidation of misacylated Asp-tRNA(Asn) or Glu-tRNA(Gln) in organisms which lack either or both of asparaginyl-tRNA or glutaminyl-tRNA synthetases. The reaction takes place in the presence of glutamine and ATP through an activated phospho-Asp-tRNA(Asn) or phospho-Glu-tRNA(Gln). In Campylobacter jejuni subsp. doylei (strain ATCC BAA-1458 / RM4099 / 269.97), this protein is Aspartyl/glutamyl-tRNA(Asn/Gln) amidotransferase subunit C.